The sequence spans 75 residues: Brevinin-2SN1 (75 aa).

A signal peptide spans 1 to 22 (MFTMKKPLLFLFFLGTISLSFC). The propeptide at 23–40 (EEERGADEDDEVEMTEEE) is removed in mature form. Cys-69 and Cys-75 are joined by a disulfide.

The protein belongs to the frog skin active peptide (FSAP) family. Brevinin subfamily. As to expression, expressed by the skin glands.

The protein localises to the secreted. Antimicrobial peptide. Active against some Gram-negative and a variety of Gram-positive bacterial strains. Active against fungus C.glabrata 090902 but not against C.albicans ATCC 10231. Shows hemolytic activity against human erythrocytes. This Sylvirana spinulosa (Fine-spined frog) protein is Brevinin-2SN1.